We begin with the raw amino-acid sequence, 100 residues long: Integration host factor subunit alpha (100 aa).

This sequence belongs to the bacterial histone-like protein family. Heterodimer of an alpha and a beta chain.

This protein is one of the two subunits of integration host factor, a specific DNA-binding protein that functions in genetic recombination as well as in transcriptional and translational control. In Rhizorhabdus wittichii (strain DSM 6014 / CCUG 31198 / JCM 15750 / NBRC 105917 / EY 4224 / RW1) (Sphingomonas wittichii), this protein is Integration host factor subunit alpha.